Reading from the N-terminus, the 185-residue chain is Large ribosomal subunit protein uL6 (185 aa).

This sequence belongs to the universal ribosomal protein uL6 family. As to quaternary structure, part of the 50S ribosomal subunit.

Its function is as follows. This protein binds to the 23S rRNA, and is important in its secondary structure. It is located near the subunit interface in the base of the L7/L12 stalk, and near the tRNA binding site of the peptidyltransferase center. This is Large ribosomal subunit protein uL6 from Staphylothermus marinus (strain ATCC 43588 / DSM 3639 / JCM 9404 / F1).